Consider the following 293-residue polypeptide: Small ribosomal subunit protein uS2 (293 aa).

The interval 239–293 is disordered; sequence PAGGADWEAAPAGFPAAATGEWSEAQPATWESGAAAATGPSTEWADSAPKDTAGW. Residues 247 to 256 are compositionally biased toward low complexity; the sequence is AAPAGFPAAA.

It belongs to the universal ribosomal protein uS2 family. In terms of assembly, component of the small ribosomal subunit. Mature ribosomes consist of a small (40S) and a large (60S) subunit. The 40S subunit contains about 33 different proteins and 1 molecule of RNA (18S). The 60S subunit contains about 49 different proteins and 3 molecules of RNA (25S, 5.8S and 5S). Interacts with RPS21.

It localises to the cytoplasm. Functionally, required for the assembly and/or stability of the 40S ribosomal subunit. Required for the processing of the 20S rRNA-precursor to mature 18S rRNA in a late step of the maturation of 40S ribosomal subunits. This Chaetomium globosum (strain ATCC 6205 / CBS 148.51 / DSM 1962 / NBRC 6347 / NRRL 1970) (Soil fungus) protein is Small ribosomal subunit protein uS2.